Consider the following 299-residue polypeptide: Non-homologous end joining protein Ku (299 aa).

Residues Ile-10–Thr-188 form the Ku domain. Disordered regions lie at residues Ala-227–Val-249 and Ala-261–Ser-299. Residues Ala-273 to Ser-283 are compositionally biased toward basic and acidic residues. Basic residues predominate over residues Pro-284–Ser-299.

This sequence belongs to the prokaryotic Ku family. As to quaternary structure, homodimer. Interacts with LigD.

Its function is as follows. With LigD forms a non-homologous end joining (NHEJ) DNA repair enzyme, which repairs dsDNA breaks with reduced fidelity. Binds linear dsDNA with 5'- and 3'- overhangs but not closed circular dsDNA nor ssDNA. Recruits and stimulates the ligase activity of LigD. The polypeptide is Non-homologous end joining protein Ku (Pseudomonas syringae pv. tomato (strain ATCC BAA-871 / DC3000)).